A 201-amino-acid chain; its full sequence is Recombination protein RecR (201 aa).

The C4-type zinc-finger motif lies at 60–75; sequence CSTCGNVDTADPCMIC. One can recognise a Toprim domain in the interval 83 to 178; it reads GTIIVVEDVS…KVTRLAHGVP (96 aa).

This sequence belongs to the RecR family.

May play a role in DNA repair. It seems to be involved in an RecBC-independent recombinational process of DNA repair. It may act with RecF and RecO. This is Recombination protein RecR from Mesorhizobium japonicum (strain LMG 29417 / CECT 9101 / MAFF 303099) (Mesorhizobium loti (strain MAFF 303099)).